The primary structure comprises 236 residues: MHLRPSPQSPQSACCNPELPATEPPTPAEHPTAFRRSQAPSRTPRTFSRETLHILRENRCLAVSKVVHTPDIPPKTPASQAASNRAHRTAKHPARRQSCKLKAPNPCVGHPLRIPSPKHSPRHCTLHDIRHRKKLHPLNNPKGANKRKTPPLIQPTVLEPLPHPVLSPHNISSSTDHPDPSPAIKPSPPNNTRHILLTTKSLLLILTHPIISAYPFHPYFSFTPHEHHIRSRDTQN.

3 disordered regions span residues 1–48, 67–122, and 134–192; these read MHLR…RTFS, VHTP…HSPR, and KLHP…PNNT. A compositionally biased stretch (basic residues) spans 85-99; the sequence is RAHRTAKHPARRQSC. The segment covering 180–189 has biased composition (pro residues); it reads PSPAIKPSPP.

This is an uncharacterized protein from Encephalitozoon cuniculi (strain GB-M1) (Microsporidian parasite).